Consider the following 419-residue polypeptide: MNQEDNTGGGGIFGLFKWTKDALFGTDISPSMKYKDQEERRDRSRYAQDDTNFSMKFGNDSNRRSTNLSRSNSWSGLDSTLHRKYELLPEYNENGFNSIVNGDHHSKERIRSLRSPAPIVPREPLRNEPTDTFGHRLHTKRRTINELSNSQIPFIPPQEDDPLLSKLFNKDGVNEVRRSPYKLSVKDIPGKFPSPLTKRDEIDNYYVRDEDACHKNREYKKAYFDLFAQMDLNSRDLEDLCEDVREQREQFHRNEQTYKQAYEEMRAELVNELKKSKTLFENYYSLGQKYKSLKKVLDQTISHEAELATSRERLYQEEDLKNFEIQTLKQRLSDLELKYTNLQIEKDMQRDNYESEIHDLLLQLSLRNNERKDTSAGSNIFSTGQYDRTPFHNGNNSYDSNSHSWDTDYLKNIDGFIER.

S29 bears the Phosphoserine mark. A compositionally biased stretch (basic and acidic residues) spans Y34 to Q48. A disordered region spans residues Y34–G76. Over residues R64–S75 the composition is skewed to low complexity. Phosphoserine occurs at positions 73 and 115. Residues Q229–S355 are a coiled coil.

The protein belongs to the BBP1 family. Homodimer. Interacts with KAR1, MPS2 and SPC29.

The protein resides in the cytoplasm. It localises to the cytoskeleton. Its subcellular location is the microtubule organizing center. It is found in the spindle pole body. Functionally, component of the spindle pole body (SPB) required for insertion of the nascent SPB into the nuclear envelope and for the proper execution of spindle pole body (SPB) duplication. Connects the central plaque of the SPB with the half-bridge. Required for proper localization of CDC5 at the SPB and for proper M-phase progression. In Saccharomyces cerevisiae (strain RM11-1a) (Baker's yeast), this protein is Spindle pole component BBP1 (BBP1).